A 176-amino-acid chain; its full sequence is MSHASDTLVMGKIGAPYGVKGWVKITSYTDELDGIFSYTPWLVGQEGNTKEIVVDQWRTHNKGLVAKLVGVETRDDAESIKNLDISIKAQQLPQLDGDEFYWRELVGMQVVTEQGYNLGVVKELFETGANDVMLIKANLKDAFGQKERMVPYLIDQVVKKVDREAKTIQVDWDPSF.

The PRC barrel domain maps to 97 to 176 (GDEFYWRELV…TIQVDWDPSF (80 aa)).

This sequence belongs to the RimM family. As to quaternary structure, binds ribosomal protein uS19.

The protein resides in the cytoplasm. In terms of biological role, an accessory protein needed during the final step in the assembly of 30S ribosomal subunit, possibly for assembly of the head region. Essential for efficient processing of 16S rRNA. May be needed both before and after RbfA during the maturation of 16S rRNA. It has affinity for free ribosomal 30S subunits but not for 70S ribosomes. This Pseudoalteromonas atlantica (strain T6c / ATCC BAA-1087) protein is Ribosome maturation factor RimM.